Here is a 290-residue protein sequence, read N- to C-terminus: 33 kDa chaperonin (290 aa).

2 disulfides stabilise this stretch: C235–C237 and C268–C271.

The protein belongs to the HSP33 family. Post-translationally, under oxidizing conditions two disulfide bonds are formed involving the reactive cysteines. Under reducing conditions zinc is bound to the reactive cysteines and the protein is inactive.

It is found in the cytoplasm. Its function is as follows. Redox regulated molecular chaperone. Protects both thermally unfolding and oxidatively damaged proteins from irreversible aggregation. Plays an important role in the bacterial defense system toward oxidative stress. In Streptococcus gordonii (strain Challis / ATCC 35105 / BCRC 15272 / CH1 / DL1 / V288), this protein is 33 kDa chaperonin.